A 315-amino-acid chain; its full sequence is 4-diphosphocytidyl-2-C-methyl-D-erythritol kinase (315 aa).

K26 is an active-site residue. Residue P111–A121 participates in ATP binding. D153 is a catalytic residue.

This sequence belongs to the GHMP kinase family. IspE subfamily.

The enzyme catalyses 4-CDP-2-C-methyl-D-erythritol + ATP = 4-CDP-2-C-methyl-D-erythritol 2-phosphate + ADP + H(+). The protein operates within isoprenoid biosynthesis; isopentenyl diphosphate biosynthesis via DXP pathway; isopentenyl diphosphate from 1-deoxy-D-xylulose 5-phosphate: step 3/6. Its function is as follows. Catalyzes the phosphorylation of the position 2 hydroxy group of 4-diphosphocytidyl-2C-methyl-D-erythritol. The polypeptide is 4-diphosphocytidyl-2-C-methyl-D-erythritol kinase (Salinispora tropica (strain ATCC BAA-916 / DSM 44818 / JCM 13857 / NBRC 105044 / CNB-440)).